The following is a 1194-amino-acid chain: Protein argonaute 3 (1194 aa).

Over residues 1–98 (MDRGGYRGGR…GRGGGGDRGR (98 aa)) the composition is skewed to basic and acidic residues. Disordered regions lie at residues 1-277 (MDRG…VSQS) and 299-341 (TVLP…DKGG). The segment covering 142-158 (PPSSSQAQVSQGVAPGD) has biased composition (low complexity). The segment covering 167–180 (VGRDGVGDVGRDGV) has biased composition (basic and acidic residues). Residues 181–214 (GDVGQGGVGDVGQVGVGDVGQGGVGDVGQGGVGD) are compositionally biased toward gly residues. The span at 215 to 228 (VGRDGVGDVGRDGV) shows a compositional bias: basic and acidic residues. Residues 229–238 (GDVGRGGVGD) show a composition bias toward gly residues. 2 stretches are compositionally biased toward low complexity: residues 256–277 (QLQQPQPQAVSQSSSQGQVSQS) and 299–316 (TVLPSSSSSNVVASHTAS). A compositionally biased stretch (polar residues) spans 317–326 (GSQVMTPKPS). A compositionally biased stretch (basic and acidic residues) spans 327 to 341 (SSDKKEPVKRPDKGG). The region spanning 540–656 (SVIEYLKLYF…VPMEFCNLVE (117 aa)) is the PAZ domain. One can recognise a Piwi domain in the interval 841 to 1145 (LVLCAMTGKH…AASRGRVYYE (305 aa)).

It belongs to the argonaute family. Ago subfamily.

Involved in RNA-mediated post-transcriptional gene silencing (PTGS). Main component of the RNA-induced silencing complex (RISC) that binds to a short guide RNA such as a microRNA (miRNA) or small interfering RNA (siRNA). RISC uses the mature miRNA or siRNA as a guide for slicer-directed cleavage of homologous mRNAs to repress gene expression. This is Protein argonaute 3 (AGO3) from Arabidopsis thaliana (Mouse-ear cress).